A 59-amino-acid chain; its full sequence is Small, acid-soluble spore protein H 2 (59 aa).

It belongs to the SspH family.

The protein resides in the spore core. The chain is Small, acid-soluble spore protein H 2 from Geobacillus kaustophilus (strain HTA426).